We begin with the raw amino-acid sequence, 366 residues long: Ribosomal RNA large subunit methyltransferase M (366 aa).

S-adenosyl-L-methionine-binding positions include serine 188, 221 to 224 (CPGG), aspartate 240, aspartate 260, and aspartate 277. Catalysis depends on lysine 306, which acts as the Proton acceptor.

This sequence belongs to the class I-like SAM-binding methyltransferase superfamily. RNA methyltransferase RlmE family. RlmM subfamily. Monomer.

Its subcellular location is the cytoplasm. It catalyses the reaction cytidine(2498) in 23S rRNA + S-adenosyl-L-methionine = 2'-O-methylcytidine(2498) in 23S rRNA + S-adenosyl-L-homocysteine + H(+). In terms of biological role, catalyzes the 2'-O-methylation at nucleotide C2498 in 23S rRNA. The chain is Ribosomal RNA large subunit methyltransferase M from Salmonella heidelberg (strain SL476).